The following is a 128-amino-acid chain: Transcription antitermination protein NusB (128 aa).

This sequence belongs to the NusB family.

Its function is as follows. Involved in transcription antitermination. Required for transcription of ribosomal RNA (rRNA) genes. Binds specifically to the boxA antiterminator sequence of the ribosomal RNA (rrn) operons. The sequence is that of Transcription antitermination protein NusB from Listeria innocua serovar 6a (strain ATCC BAA-680 / CLIP 11262).